The following is a 326-amino-acid chain: Nicotianamine synthase 2 (326 aa).

This sequence belongs to the nicotianamine synthase (NAS)-like family. As to expression, expressed in roots.

It catalyses the reaction 3 S-adenosyl-L-methionine = nicotianamine + 3 S-methyl-5'-thioadenosine + 3 H(+). Functionally, synthesizes nicotianamine, a polyamine that is the first intermediate in the synthesis of the phytosiderophores of the mugineic acid type found in gramineae which serve as a sensor for the physiological iron status within the plant, and/or might be involved in the transport of iron. This is Nicotianamine synthase 2 (NAS2) from Oryza sativa subsp. japonica (Rice).